A 481-amino-acid polypeptide reads, in one-letter code: Glutamate-1-semialdehyde 2,1-aminomutase, chloroplastic (481 aa).

The tract at residues 18–40 is disordered; that stretch reads NQTPKWGFSPSHRRCNPSSSSSA. An N6-(pyridoxal phosphate)lysine modification is found at Lys321.

Belongs to the class-III pyridoxal-phosphate-dependent aminotransferase family. HemL subfamily. Homodimer. It depends on pyridoxal 5'-phosphate as a cofactor.

Its subcellular location is the plastid. The protein resides in the chloroplast. The catalysed reaction is (S)-4-amino-5-oxopentanoate = 5-aminolevulinate. It functions in the pathway porphyrin-containing compound metabolism; protoporphyrin-IX biosynthesis; 5-aminolevulinate from L-glutamyl-tRNA(Glu): step 2/2. It participates in porphyrin-containing compound metabolism; chlorophyll biosynthesis. The chain is Glutamate-1-semialdehyde 2,1-aminomutase, chloroplastic from Solanum lycopersicum (Tomato).